A 315-amino-acid chain; its full sequence is Glutathione synthetase (315 aa).

An ATP-grasp domain is found at 125 to 310; it reads KLFTAWFSDL…ITGMLMDAIE (186 aa). N-beta-linked (GlcNAc) arginine glycosylation occurs at Arg-256. Mg(2+) contacts are provided by Glu-281 and Asn-283.

Belongs to the prokaryotic GSH synthase family. The cofactor is Mg(2+). Mn(2+) serves as cofactor. Post-translationally, glycosylation at Arg-256 by NleB enhances the glutathione synthetase activity, leading to an increase in glutathione production. Glycosylation may promote C.rodentium survival in oxidative stress conditions.

The catalysed reaction is gamma-L-glutamyl-L-cysteine + glycine + ATP = glutathione + ADP + phosphate + H(+). The protein operates within sulfur metabolism; glutathione biosynthesis; glutathione from L-cysteine and L-glutamate: step 2/2. The protein is Glutathione synthetase of Citrobacter rodentium.